Here is a 109-residue protein sequence, read N- to C-terminus: MRILNMNEYIGLNHYLILSSLVFTIGMLGLFMHRKNIINILMSIELMLLAVNINFVAFSVYMQELSGQIFSIIILTIAAAETSIGLAILLIYFRNKGSIEVTDINQMRG.

3 consecutive transmembrane segments (helical) span residues 12 to 32 (LNHYLILSSLVFTIGMLGLFM), 40 to 60 (ILMSIELMLLAVNINFVAFSV), and 72 to 92 (IIILTIAAAETSIGLAILLIY).

Belongs to the complex I subunit 4L family. NDH-1 is composed of 14 different subunits. Subunits NuoA, H, J, K, L, M, N constitute the membrane sector of the complex.

Its subcellular location is the cell inner membrane. The enzyme catalyses a quinone + NADH + 5 H(+)(in) = a quinol + NAD(+) + 4 H(+)(out). Functionally, NDH-1 shuttles electrons from NADH, via FMN and iron-sulfur (Fe-S) centers, to quinones in the respiratory chain. The immediate electron acceptor for the enzyme in this species is believed to be ubiquinone. Couples the redox reaction to proton translocation (for every two electrons transferred, four hydrogen ions are translocated across the cytoplasmic membrane), and thus conserves the redox energy in a proton gradient. The polypeptide is NADH-quinone oxidoreductase subunit K (Rickettsia bellii (strain RML369-C)).